Consider the following 233-residue polypeptide: MAKISKRINKIREGVDRNKLYDLSAAIGLVKERAVAKFDETIEIAMNLGVDPRHADQMVRGVVNLPNGTGRTVRVAVFARGDKAEEAKKAGADIVGAEELFEIVNGGKIDFDRCIATPDMMPLVGRLGKVLGPRGMMPNPKVGTVTTDVAAAVAASKGGAVEFRVEKAGIIHAGIGKVSFDNAKLEENIKAFADAVIKAKPSAAKGEYVKRVSLSSTMGVGVKVDPATVKVVA.

Belongs to the universal ribosomal protein uL1 family. In terms of assembly, part of the 50S ribosomal subunit.

Functionally, binds directly to 23S rRNA. The L1 stalk is quite mobile in the ribosome, and is involved in E site tRNA release. Protein L1 is also a translational repressor protein, it controls the translation of the L11 operon by binding to its mRNA. This Brucella anthropi (strain ATCC 49188 / DSM 6882 / CCUG 24695 / JCM 21032 / LMG 3331 / NBRC 15819 / NCTC 12168 / Alc 37) (Ochrobactrum anthropi) protein is Large ribosomal subunit protein uL1.